The following is a 241-amino-acid chain: Phosphoribosylaminoimidazole-succinocarboxamide synthase (241 aa).

This sequence belongs to the SAICAR synthetase family.

The catalysed reaction is 5-amino-1-(5-phospho-D-ribosyl)imidazole-4-carboxylate + L-aspartate + ATP = (2S)-2-[5-amino-1-(5-phospho-beta-D-ribosyl)imidazole-4-carboxamido]succinate + ADP + phosphate + 2 H(+). It participates in purine metabolism; IMP biosynthesis via de novo pathway; 5-amino-1-(5-phospho-D-ribosyl)imidazole-4-carboxamide from 5-amino-1-(5-phospho-D-ribosyl)imidazole-4-carboxylate: step 1/2. This Bacillus subtilis (strain 168) protein is Phosphoribosylaminoimidazole-succinocarboxamide synthase (purC).